A 551-amino-acid polypeptide reads, in one-letter code: MSNIQVLASSQLSDKIIARPTTKFHPSIWGDRFLHYNISEQDLVCKQEKVEELIQVVKKEILSSNHDQLKLIDNLQRLGLSYHFESEIEKLLEQLSITHHQNHHDLHDASLWFRLLRQHGFNVSSSIFEKFKDEEGNFKESLITDVPGLLSLYEASHLSYVGESILDEALAFTTTHLKAIVANSKDHPLSHQISIVLHRPLRKTIERLHARFYISIYEKDASHNKLLLELAKLDFNLLQCFHKKELSEITRWWKEHEFAKKFPFARDRMVELYFWILGVYYEPKYSRARKLLTKVIALTSITDDIYDAYGTIDELQLLTKAIQRWDINCMDKLKQEYLKTYYKVMLDSYEEFEKELKKEELYKLEYAKEEMKRIIGGYFEEARWLNEGYFPSFDEHLRVSYVSSGNVLLIATSFVGMHDVVTHETLDWLSKDPKIVSASTLLSRFMDDIGSRKFEQKRNHIPSTVDCYMKQYGVSEEEAIKELNKRVDTHWKEINEDFIRPAVVPFPILVRVLNFTKIVDLLYKEGDDQYTNVGKVLKESIAALLIDSIPL.

Residues R266, D303, D307, R444, and D447 each coordinate (2E,6E)-farnesyl diphosphate. Residues D303 and D307 each contribute to the Mg(2+) site. The DDXXD motif signature appears at 303–307 (DDIYD). Residues D447, S451, and E455 each coordinate Mg(2+).

The protein belongs to the terpene synthase family. Tpsb subfamily. It depends on Mg(2+) as a cofactor. Requires Mn(2+) as cofactor. In terms of tissue distribution, highly expressed in glandular trichomes.

It catalyses the reaction (2E,6E)-farnesyl diphosphate + H2O = (2E,6E)-hedycaryol + diphosphate. The protein operates within secondary metabolite biosynthesis; terpenoid biosynthesis. Involved in sesquiterpene olefins biosynthesis, constituants of cannabinoids and terpenoids-rich resins. Catalyzes primarily the conversion of (2E)-farnesyl diphosphate to hedycaryol, which is spontaneously converted to elemol as a thermal degradation product. This is Hedycaryol synthase TPS20CT from Cannabis sativa (Hemp).